Consider the following 361-residue polypeptide: Molybdopterin synthase catalytic subunit (361 aa).

Substrate contacts are provided by residues 101-102 (HR), Lys117, and 124-126 (KKE).

Belongs to the MoaE family. MOCS2B subfamily. Heterotetramer; composed of 2 small (Mocs2A) and 2 large (Mocs2B) subunits.

It localises to the cytoplasm. The catalysed reaction is 2 [molybdopterin-synthase sulfur-carrier protein]-C-terminal-Gly-aminoethanethioate + cyclic pyranopterin phosphate + H2O = molybdopterin + 2 [molybdopterin-synthase sulfur-carrier protein]-C-terminal Gly-Gly + 2 H(+). The protein operates within cofactor biosynthesis; molybdopterin biosynthesis. In terms of biological role, catalytic subunit of the molybdopterin synthase complex, a complex that catalyzes the conversion of precursor Z into molybdopterin. Acts by mediating the incorporation of 2 sulfur atoms from thiocarboxylated Mocs2A into precursor Z to generate a dithiolene group. This Drosophila persimilis (Fruit fly) protein is Molybdopterin synthase catalytic subunit.